A 167-amino-acid chain; its full sequence is Menaquinol:cytochrome c reductase iron-sulfur subunit (167 aa).

One can recognise a Rieske domain in the interval 59-158; that stretch reads TKEPQRFDFK…QEVKDGFLYL (100 aa). Residues Cys-100, His-102, Cys-121, and His-124 each contribute to the [2Fe-2S] cluster site. A disulfide bridge links Cys-105 with Cys-123.

It belongs to the Rieske iron-sulfur protein family. As to quaternary structure, the main subunits of the menaquinol:cytochrome c complex are a Rieske-type iron-sulfur protein (QcrA), a cytochrome b (QcrB) and a cytochrome c (QcrC). The cofactor is [2Fe-2S] cluster.

Component of the menaquinol:cytochrome c reductase complex. The Rieske protein is a high potential 2Fe-2S protein. The chain is Menaquinol:cytochrome c reductase iron-sulfur subunit (qcrA) from Bacillus subtilis (strain 168).